A 251-amino-acid chain; its full sequence is D-aminoacyl-tRNA deacylase (251 aa).

It belongs to the DtdA deacylase family. As to quaternary structure, monomer. Zn(2+) is required as a cofactor.

The enzyme catalyses a D-aminoacyl-tRNA + H2O = a tRNA + a D-alpha-amino acid + H(+). It carries out the reaction glycyl-tRNA(Ala) + H2O = tRNA(Ala) + glycine + H(+). Its function is as follows. D-aminoacyl-tRNA deacylase with broad substrate specificity. By recycling D-aminoacyl-tRNA to D-amino acids and free tRNA molecules, this enzyme counteracts the toxicity associated with the formation of D-aminoacyl-tRNA entities in vivo. The chain is D-aminoacyl-tRNA deacylase from Pyrobaculum aerophilum (strain ATCC 51768 / DSM 7523 / JCM 9630 / CIP 104966 / NBRC 100827 / IM2).